Consider the following 233-residue polypeptide: MDPLLLIGAITAGGVLIGGGVHFVPVGGAPAAMATATGVGTGTAMLAAGAGLTGLITAAAMTGQSPLMIMAAGAVGSMLMIGITMLVGNLIYVFGVGTVPVSAKVSVDPITGMEQEKYVTPGTEGHGLPTVCFVSGIIGGALGGIGGGLIYWALNEALKTLSYGAMGAAGVAAIFAVGIFFINAVIASYNIGGTIEGFHDPKFKRIGRGIVACLIASIVAGALSTLLVYGGVF.

Helical transmembrane passes span 4-24 (LLLIGAITAGGVLIGGGVHFV), 39-59 (VGTGTAMLAAGAGLTGLITAA), 67-87 (LMIMAAGAVGSMLMIGITMLV), 133-153 (FVSGIIGGALGGIGGGLIYWA), 166-186 (MGAAGVAAIFAVGIFFINAVI), and 209-229 (GIVACLIASIVAGALSTLLVY).

This sequence belongs to the MtrD family. In terms of assembly, the complex is composed of 8 subunits; MtrA, MtrB, MtrC, MtrD, MtrE, MtrF, MtrG and MtrH.

It localises to the cell membrane. The enzyme catalyses 5-methyl-5,6,7,8-tetrahydromethanopterin + coenzyme M + 2 Na(+)(in) = 5,6,7,8-tetrahydromethanopterin + methyl-coenzyme M + 2 Na(+)(out). The protein operates within one-carbon metabolism; methanogenesis from CO(2); methyl-coenzyme M from 5,10-methylene-5,6,7,8-tetrahydromethanopterin: step 2/2. Its function is as follows. Part of a complex that catalyzes the formation of methyl-coenzyme M and tetrahydromethanopterin from coenzyme M and methyl-tetrahydromethanopterin. This is an energy-conserving, sodium-ion translocating step. The chain is Tetrahydromethanopterin S-methyltransferase subunit D from Methanothermobacter marburgensis (strain ATCC BAA-927 / DSM 2133 / JCM 14651 / NBRC 100331 / OCM 82 / Marburg) (Methanobacterium thermoautotrophicum).